The sequence spans 490 residues: ATP synthase subunit beta, plastid (490 aa).

170 to 177 (GGAGVGKT) provides a ligand contact to ATP.

Belongs to the ATPase alpha/beta chains family. As to quaternary structure, F-type ATPases have 2 components, CF(1) - the catalytic core - and CF(0) - the membrane proton channel. CF(1) has five subunits: alpha(3), beta(3), gamma(1), delta(1), epsilon(1). CF(0) has four main subunits: a(1), b(1), b'(1) and c(9-12).

It localises to the plastid membrane. The catalysed reaction is ATP + H2O + 4 H(+)(in) = ADP + phosphate + 5 H(+)(out). Produces ATP from ADP in the presence of a proton gradient across the membrane. The catalytic sites are hosted primarily by the beta subunits. This chain is ATP synthase subunit beta, plastid (atpB), found in Cuscuta japonica (Japanese dodder).